Consider the following 336-residue polypeptide: Polyprenyl transferase dpasC (336 aa).

The helical transmembrane segment at 34-54 (LFTIFAGGMFLFVASFPTTAF) threads the bilayer. Asn-66 carries N-linked (GlcNAc...) asparagine glycosylation. 7 helical membrane passes run 80–100 (ALCLSACYSFCGAGMVWNDWI), 125–145 (QAMLWMVFQMAVSWWLLHFML), 181–201 (YILGFTIAWPAVPGRTAIFHG), 205–225 (FAESVQACMPLLNMVFFWTIF), 253–273 (HVHLLLCLLLVPVAVCVPMYL), 274–294 (NQFHSTWLWVSWAGVWALSLL), and 311–331 (LHVDNFLLGAWTVVACTIELL).

The protein belongs to the UbiA prenyltransferase family. The cofactor is Mg(2+).

It is found in the membrane. It functions in the pathway secondary metabolite biosynthesis; terpenoid biosynthesis. Functionally, polyprenyl transferase; part of the gene cluster that mediates the biosynthesis of the diterpenoid pyrones subglutinols A and B. The first step of the pathway is the synthesis of the alpha-pyrone moiety by the polyketide synthase dpasA via condensation of one acetyl-CoA starter unit with 3 malonyl-CoA units and 2 methylations. The alpha-pyrone is then combined with geranylgeranyl pyrophosphate (GGPP) formed by the GGPP synthase dpasD through the action of the prenyltransferase dpasC to yield a linear alpha-pyrone diterpenoid. Subsequent steps in the diterpenoid pyrone biosynthetic pathway involve the decalin core formation, which is initiated by the epoxidation of the C10-C11 olefin by the FAD-dependent oxidoreductase dpasE, and is followed by a cyclization cascade catalyzed by the terpene cyclase dpasB. The FAD-linked oxidoreductase dpasF is then involved in tetrahydrofuran (THF) ring formation at the C5 unit to complete the formation of subglutinols A and B. DpasF possesses also an additional catalytic ability of multi-step oxidations to generate a new DDP analog with an enone system at the C5 named FDDP A. This Apiospora sacchari (Arthrinium sacchari) protein is Polyprenyl transferase dpasC.